We begin with the raw amino-acid sequence, 159 residues long: Transcription elongation factor GreA (159 aa).

A coiled-coil region spans residues 43-76 (LSENAEYDAAREEQSQLEAKIGDLENKLASATIL).

It belongs to the GreA/GreB family.

In terms of biological role, necessary for efficient RNA polymerase transcription elongation past template-encoded arresting sites. The arresting sites in DNA have the property of trapping a certain fraction of elongating RNA polymerases that pass through, resulting in locked ternary complexes. Cleavage of the nascent transcript by cleavage factors such as GreA or GreB allows the resumption of elongation from the new 3'terminus. GreA releases sequences of 2 to 3 nucleotides. The chain is Transcription elongation factor GreA from Chlorobaculum parvum (strain DSM 263 / NCIMB 8327) (Chlorobium vibrioforme subsp. thiosulfatophilum).